We begin with the raw amino-acid sequence, 680 residues long: Tumor protein 63 (680 aa).

The interval 1–107 (MNFETSRCAT…MQDSDLSDPM (107 aa)) is transcription activation. A compositionally biased stretch (polar residues) spans 122 to 157 (QQIQNGSSSTSPYNTDHAQNSVTAPSPYAQPSSTFD). The disordered stretch occupies residues 122 to 171 (QQIQNGSSSTSPYNTDHAQNSVTAPSPYAQPSSTFDALSPSPAIPSNTDY). A DNA-binding region spans residues 170–362 (DYPGPHSFDV…KADEDSIRKQ (193 aa)). Zn(2+) contacts are provided by Cys244, His247, Cys308, and Cys312. The span at 351–360 (DRKADEDSIR) shows a compositional bias: basic and acidic residues. Disordered stretches follow at residues 351-393 (DRKA…IKKR) and 436-472 (RQQQQQQHQHLLQKQTSMQSQSSYGNSSPPLNKMNSM). Residues 352–388 (RKADEDSIRKQQVSDSAKNGDGTKRPFRQNTHGIQMT) form an interaction with HIPK2 region. A compositionally biased stretch (polar residues) spans 379 to 389 (RQNTHGIQMTS). The interval 394 to 443 (RSPDDELLYLPVRGRETYEMLLKIKESLELMQYLPQHTIETYRQQQQQQH) is oligomerization. Residues 437–463 (QQQQQQHQHLLQKQTSMQSQSSYGNSS) are compositionally biased toward low complexity. Positions 541-607 (PPYPTDCSIV…WKGILDHRQL (67 aa)) constitute an SAM domain. A transactivation inhibition region spans residues 610–680 (FSSPPHLLRT…KQQRIKEEGE (71 aa)). A Glycyl lysine isopeptide (Lys-Gly) (interchain with G-Cter in SUMO) cross-link involves residue Lys676.

Belongs to the p53 family. In terms of assembly, binds DNA as a homotetramer. Isoform composition of the tetramer may determine transactivation activity. Interacts with HIPK2. Interacts with SSRP1, leading to stimulate coactivator activity. Interacts with WWP1. Interacts with PDS5A. Interacts (via activation domain) with NOC2L. Zn(2+) is required as a cofactor. In terms of processing, may be sumoylated. Ubiquitinated. Polyubiquitination involves WWP1 and leads to proteasomal degradation of this protein. Widely expressed, notably in thymus, prostate, placenta, and skeletal muscle, although the precise isoform varies according to tissue type. Progenitor cell layers of skin, breast and prostate express high levels of DeltaN-type isoforms.

Its subcellular location is the nucleus. In terms of biological role, acts as a sequence specific DNA binding transcriptional activator or repressor. The isoforms contain a varying set of transactivation and auto-regulating transactivation inhibiting domains thus showing an isoform specific activity. May be required in conjunction with TP73/p73 for initiation of p53/TP53 dependent apoptosis in response to genotoxic insults and the presence of activated oncogenes. Involved in Notch signaling by probably inducing JAG1 and JAG2. Activates RIPK4 transcription. Plays a role in the regulation of epithelial morphogenesis. The ratio of DeltaN-type and TA*-type isoforms may govern the maintenance of epithelial stem cell compartments and regulate the initiation of epithelial stratification from the undifferentiated embryonal ectoderm. Required for limb formation from the apical ectodermal ridge. Activates transcription of the p21 promoter. In Rattus norvegicus (Rat), this protein is Tumor protein 63 (Tp63).